The chain runs to 587 residues: RuBisCO large subunit-binding protein subunit alpha, chloroplastic (587 aa).

Positions 1 to 25 (MASTNALSSTSILRSPTNQAQTSLS) are enriched in polar residues. A disordered region spans residues 1-33 (MASTNALSSTSILRSPTNQAQTSLSKKVKQHGR). The N-terminal 47 residues, 1 to 47 (MASTNALSSTSILRSPTNQAQTSLSKKVKQHGRVNFRQKPNRFVVKA), are a transit peptide targeting the chloroplast.

Belongs to the chaperonin (HSP60) family. As to quaternary structure, oligomer of probably six alpha and six beta subunits.

Its subcellular location is the plastid. It is found in the chloroplast. This protein binds RuBisCO small and large subunits and is implicated in the assembly of the enzyme oligomer. In Pisum sativum (Garden pea), this protein is RuBisCO large subunit-binding protein subunit alpha, chloroplastic.